We begin with the raw amino-acid sequence, 227 residues long: MPIKAILTDIEGTTSAVSFVFDVLFPFARKHLPAFVREHAEQPAVAQQLQAVRDLAGEPDADVERVIALLLEWIAEDRKATPLKALQGMVWEQGYNAGQLKGHVYPDAVDALKHWHQQGYRLYVYSSGSIQAQQLIFGCSEAGDLSGLFSGYFDTTSGPKREAQSYRTIAQAMDCPAGDILFLSDIVEELDAAQAAGMATCGLARDGGALAGHRYVTSFALIDPASF.

This sequence belongs to the HAD-like hydrolase superfamily. MasA/MtnC family. In terms of assembly, monomer. Mg(2+) serves as cofactor.

It catalyses the reaction 5-methylsulfanyl-2,3-dioxopentyl phosphate + H2O = 1,2-dihydroxy-5-(methylsulfanyl)pent-1-en-3-one + phosphate. It participates in amino-acid biosynthesis; L-methionine biosynthesis via salvage pathway; L-methionine from S-methyl-5-thio-alpha-D-ribose 1-phosphate: step 3/6. The protein operates within amino-acid biosynthesis; L-methionine biosynthesis via salvage pathway; L-methionine from S-methyl-5-thio-alpha-D-ribose 1-phosphate: step 4/6. Functionally, bifunctional enzyme that catalyzes the enolization of 2,3-diketo-5-methylthiopentyl-1-phosphate (DK-MTP-1-P) into the intermediate 2-hydroxy-3-keto-5-methylthiopentenyl-1-phosphate (HK-MTPenyl-1-P), which is then dephosphorylated to form the acireductone 1,2-dihydroxy-3-keto-5-methylthiopentene (DHK-MTPene). The polypeptide is Enolase-phosphatase E1 (Pseudomonas syringae pv. syringae (strain B728a)).